Reading from the N-terminus, the 310-residue chain is Ribosomal RNA small subunit methyltransferase H (310 aa).

Residues 32–34 (AGH), Asp-52, Phe-79, Asp-100, and Gln-107 contribute to the S-adenosyl-L-methionine site.

This sequence belongs to the methyltransferase superfamily. RsmH family.

It is found in the cytoplasm. The catalysed reaction is cytidine(1402) in 16S rRNA + S-adenosyl-L-methionine = N(4)-methylcytidine(1402) in 16S rRNA + S-adenosyl-L-homocysteine + H(+). Functionally, specifically methylates the N4 position of cytidine in position 1402 (C1402) of 16S rRNA. This chain is Ribosomal RNA small subunit methyltransferase H, found in Halalkalibacterium halodurans (strain ATCC BAA-125 / DSM 18197 / FERM 7344 / JCM 9153 / C-125) (Bacillus halodurans).